A 307-amino-acid chain; its full sequence is MPLRKTKKKKVLPKSPRAPKLQPSELVIITGLSGSGKASVLKAFEDLGYYCVDNLPVDLVPQFADLVADSPEINRAALVLDIREGQGLDRLPATLRSVRQIVKSNVVFLEADDEILLRRFSETRRPHPLGISMPVKASIESERRRLAPIRKVADMMIDTSKFNVHELRALIFDRFGHARTQDHKKILVSCVSFGFRKGVPDDADLLFDVRFLPNPHFVPEFRPFTGRHPKVAKYIRSFPQTQEFINRISELLVYLLPHYISEGKSYLTIAFGCTGGQHRSVMIAEDVKKRLATAGYNVKVVHRDSPK.

31 to 38 (GLSGSGKA) is an ATP binding site. 81-84 (DIRE) is a GTP binding site.

The protein belongs to the RapZ-like family.

In terms of biological role, displays ATPase and GTPase activities. The sequence is that of Nucleotide-binding protein Acid345_3782 from Koribacter versatilis (strain Ellin345).